Reading from the N-terminus, the 656-residue chain is Exoribonuclease 2 (656 aa).

The RNB domain maps to 190–518; it reads RSDLTKTPFF…LNHRLIKSVL (329 aa). The region spanning 564–649 is the S1 motif domain; the sequence is KWRYKAEIFD…ESGQLIGKLA (86 aa).

It belongs to the RNR ribonuclease family. RNase II subfamily.

The protein localises to the cytoplasm. The catalysed reaction is Exonucleolytic cleavage in the 3'- to 5'-direction to yield nucleoside 5'-phosphates.. In terms of biological role, involved in mRNA degradation. Hydrolyzes single-stranded polyribonucleotides processively in the 3' to 5' direction. This is Exoribonuclease 2 from Psychromonas ingrahamii (strain DSM 17664 / CCUG 51855 / 37).